The chain runs to 95 residues: DNA-directed RNA polymerase subunit Rpo11 (95 aa).

It belongs to the archaeal Rpo11/eukaryotic RPB11/RPC19 RNA polymerase subunit family. In terms of assembly, part of the RNA polymerase complex.

The protein resides in the cytoplasm. The enzyme catalyses RNA(n) + a ribonucleoside 5'-triphosphate = RNA(n+1) + diphosphate. Its function is as follows. DNA-dependent RNA polymerase (RNAP) catalyzes the transcription of DNA into RNA using the four ribonucleoside triphosphates as substrates. In Methanococcus vannielii (strain ATCC 35089 / DSM 1224 / JCM 13029 / OCM 148 / SB), this protein is DNA-directed RNA polymerase subunit Rpo11.